The sequence spans 380 residues: Cytochrome b (380 aa).

A run of 4 helical transmembrane segments spans residues 34–54, 78–99, 114–134, and 179–199; these read FGSLLAMCLATQILTGLLLAM, WLIRNLHANGASFFFICIFLHI, WNTGVILLLTLMATAFVGYVL, and FFALHFLLPFVIAGITIIHLI. Heme b contacts are provided by histidine 84 and histidine 98. Heme b-binding residues include histidine 183 and histidine 197. A ubiquinone is bound at residue histidine 202. Transmembrane regions (helical) follow at residues 227 to 247, 289 to 309, 321 to 341, and 348 to 368; these read LKDILGLTLMLTPLLTLALFS, LGGVLALAASVLILLLIPFLH, LSQTLFWLLVANLLVLTWVGS, and FIIIGQMASFSYFTILLILFP.

It belongs to the cytochrome b family. The cytochrome bc1 complex contains 11 subunits: 3 respiratory subunits (MT-CYB, CYC1 and UQCRFS1), 2 core proteins (UQCRC1 and UQCRC2) and 6 low-molecular weight proteins (UQCRH/QCR6, UQCRB/QCR7, UQCRQ/QCR8, UQCR10/QCR9, UQCR11/QCR10 and a cleavage product of UQCRFS1). This cytochrome bc1 complex then forms a dimer. Heme b serves as cofactor.

The protein resides in the mitochondrion inner membrane. Its function is as follows. Component of the ubiquinol-cytochrome c reductase complex (complex III or cytochrome b-c1 complex) that is part of the mitochondrial respiratory chain. The b-c1 complex mediates electron transfer from ubiquinol to cytochrome c. Contributes to the generation of a proton gradient across the mitochondrial membrane that is then used for ATP synthesis. This Tragopan temminckii (Temminck's tragopan) protein is Cytochrome b (MT-CYB).